We begin with the raw amino-acid sequence, 371 residues long: Putative 26S proteasome regulatory subunit homolog MJ1494 (371 aa).

Gly161–Thr168 is a binding site for ATP.

It belongs to the AAA ATPase family.

In terms of biological role, the 26S proteasome is involved in the ATP-dependent degradation of ubiquitinated proteins. The regulatory (or ATPase) complex confers ATP dependency and substrate specificity to the 26S complex. The polypeptide is Putative 26S proteasome regulatory subunit homolog MJ1494 (Methanocaldococcus jannaschii (strain ATCC 43067 / DSM 2661 / JAL-1 / JCM 10045 / NBRC 100440) (Methanococcus jannaschii)).